A 459-amino-acid polypeptide reads, in one-letter code: UDP-N-acetylmuramoylalanine--D-glutamate ligase (459 aa).

119–125 (GTNGKTT) is a binding site for ATP.

Belongs to the MurCDEF family.

It localises to the cytoplasm. It catalyses the reaction UDP-N-acetyl-alpha-D-muramoyl-L-alanine + D-glutamate + ATP = UDP-N-acetyl-alpha-D-muramoyl-L-alanyl-D-glutamate + ADP + phosphate + H(+). Its pathway is cell wall biogenesis; peptidoglycan biosynthesis. Its function is as follows. Cell wall formation. Catalyzes the addition of glutamate to the nucleotide precursor UDP-N-acetylmuramoyl-L-alanine (UMA). In Lacticaseibacillus casei (strain BL23) (Lactobacillus casei), this protein is UDP-N-acetylmuramoylalanine--D-glutamate ligase.